The following is a 769-amino-acid chain: Discoidin, CUB and LCCL domain-containing protein 2 (769 aa).

A compositionally biased stretch (low complexity) spans 1-29; sequence MASRAPLRAARSPQDPGGRAAPAATGRAP. The segment at 1–39 is disordered; sequence MASRAPLRAARSPQDPGGRAAPAATGRAPLPSAGWCPLP. The first 63 residues, 1–63, serve as a signal peptide directing secretion; it reads MASRAPLRAA…LLLLLPDAGA (63 aa). Residues 64–523 lie on the Extracellular side of the membrane; sequence QKGDGCGHTV…VTPSVTKDVA (460 aa). 2 disulfide bridges follow: C69-C96 and C123-C145. Residues 69-184 form the CUB domain; it reads CGHTVLGPES…RGFLASYSVI (116 aa). N92 carries N-linked (GlcNAc...) asparagine glycosylation. N152 carries an N-linked (GlcNAc...) asparagine glycan. The LCCL domain maps to 184–282; the sequence is IDKQDLITCL…MVGYLSTSLF (99 aa). A disulfide bridge connects residues C212 and C234. The N-linked (GlcNAc...) asparagine glycan is linked to N269. C289 and C446 are disulfide-bonded. Residues 289-446 form the F5/8 type C domain; that stretch reads CYGTLGMESG…IAMKVELLGC (158 aa). Residues 455-476 form a disordered region; the sequence is PKLTQPPPPRNSNNLKNTTVHP. Positions 465–474 are enriched in polar residues; that stretch reads NSNNLKNTTV. 2 N-linked (GlcNAc...) asparagine glycosylation sites follow: N471 and N511. Residues 524-544 traverse the membrane as a helical segment; it reads LAAVLVPVLVMALTTLILILV. The Cytoplasmic segment spans residues 545-769; it reads CAWHWRNRKK…EKFDAFKETL (225 aa). A Phosphoserine modification is found at S601. The disordered stretch occupies residues 719-769; sequence SCSSGQAQYDTPKGGKPAAAPEELVYQVPQSTQEASGAGRDEKFDAFKETL. The segment covering 757 to 769 has biased composition (basic and acidic residues); it reads GRDEKFDAFKETL.

The protein localises to the membrane. The chain is Discoidin, CUB and LCCL domain-containing protein 2 (Dcbld2) from Rattus norvegicus (Rat).